An 800-amino-acid polypeptide reads, in one-letter code: Cation/H(+) antiporter 9 (800 aa).

12 helical membrane passes run 43 to 63 (VIFG…FVCI), 73 to 93 (IGIP…PQLL), 110 to 130 (NVAL…LMGV), 145 to 165 (IVIA…FRNF), 186 to 206 (VIVS…VYEL), 216 to 236 (IAIS…VCIS), 247 to 267 (GIAN…LFIF), 287 to 306 (VYLY…LSVF), 338 to 358 (LVTN…ADVV), 371 to 391 (ILLL…PCLI), 401 to 421 (VIIA…FDVA), and 430 to 450 (ATYT…PTII).

This sequence belongs to the monovalent cation:proton antiporter 2 (CPA2) transporter (TC 2.A.37) family. CHX (TC 2.A.37.4) subfamily.

It is found in the membrane. In terms of biological role, may operate as a cation/H(+) antiporter. This Arabidopsis thaliana (Mouse-ear cress) protein is Cation/H(+) antiporter 9 (CHX9).